The chain runs to 147 residues: D-aminoacyl-tRNA deacylase (147 aa).

The Gly-cisPro motif, important for rejection of L-amino acids motif lies at 136–137 (GP).

This sequence belongs to the DTD family. In terms of assembly, homodimer.

It localises to the cytoplasm. The catalysed reaction is glycyl-tRNA(Ala) + H2O = tRNA(Ala) + glycine + H(+). The enzyme catalyses a D-aminoacyl-tRNA + H2O = a tRNA + a D-alpha-amino acid + H(+). In terms of biological role, an aminoacyl-tRNA editing enzyme that deacylates mischarged D-aminoacyl-tRNAs. Also deacylates mischarged glycyl-tRNA(Ala), protecting cells against glycine mischarging by AlaRS. Acts via tRNA-based rather than protein-based catalysis; rejects L-amino acids rather than detecting D-amino acids in the active site. By recycling D-aminoacyl-tRNA to D-amino acids and free tRNA molecules, this enzyme counteracts the toxicity associated with the formation of D-aminoacyl-tRNA entities in vivo and helps enforce protein L-homochirality. This chain is D-aminoacyl-tRNA deacylase, found in Persephonella marina (strain DSM 14350 / EX-H1).